The sequence spans 651 residues: MSEKLYPVLPEAKKNTLIDNETYLEWYEESVSDPDGFWAKHGRRIDWFKPFTKVKNTDFNGDVTIKWYEDGVTNVSYNCIDRHLKSRGDKVAIIWEGDNPYIDKKITYRELYENVCRMANVLKKHGVKKGDRVTIYLPMIPEAAYAMLACARIGAVHSVVFAGFSPEALAGRIVDCESTFVITADEGVRGGKPVALKENTDTAIDIAAKQYVMVNKVLVVRRTGGKVSWGRGRDLWYHQEVASVEPHCEPEPMNAEDPLFILYTSGSTGKPKGVLHTTGGYLVYASMTHQYVFDYHDGEIYWCTADVGWVTGHSYIVYGPLANGATTLMFEGVPNFPDQGRFWEVVDKHHVNIFYTAPTALRALMGAGDEFVTRSSRSTLRLLGSVGEPINPEAWEWYYNVVGDQKCPIVDTWWQTENGGILITPLPGATDLKPGSATRPFFGVKPVLVDNEGNVQECVADGNLCISDSWPGQMRTVYGDHKRFIETYFSTYKGMYFSGDGCRRDEDGYYWITGRVDDVLNISGHRLGTAEIESALVSHHSVSEAAVVGYPHPIKGQGIYCYVTLMTGADAQDPDELRKELVQHVRKEIGPIATPDKIQFAPGLPKTRSGKIMRRILRKIAEDEFGALGDTSTLADRGVVDDLIENRQNKK.

CoA-binding positions include 189-192, threonine 311, and asparagine 335; that span reads RGGK. ATP-binding positions include 387–389, 411–416, aspartate 500, and arginine 515; these read GEP and DTWWQT. Serine 523 is a binding site for CoA. Arginine 526 provides a ligand contact to ATP. Residues valine 537, histidine 539, and valine 542 each contribute to the Mg(2+) site. Residue arginine 586 coordinates CoA. N6-acetyllysine is present on lysine 611.

The protein belongs to the ATP-dependent AMP-binding enzyme family. Mg(2+) is required as a cofactor. Acetylated. Deacetylation by the SIR2-homolog deacetylase activates the enzyme.

It catalyses the reaction acetate + ATP + CoA = acetyl-CoA + AMP + diphosphate. In terms of biological role, catalyzes the conversion of acetate into acetyl-CoA (AcCoA), an essential intermediate at the junction of anabolic and catabolic pathways. AcsA undergoes a two-step reaction. In the first half reaction, AcsA combines acetate with ATP to form acetyl-adenylate (AcAMP) intermediate. In the second half reaction, it can then transfer the acetyl group from AcAMP to the sulfhydryl group of CoA, forming the product AcCoA. The chain is Acetyl-coenzyme A synthetase from Brucella melitensis biotype 2 (strain ATCC 23457).